The chain runs to 603 residues: MSSMRTYVAIMKKPSVEHVDNVDKKASKPSWRVSLSAGLRSSCSLQLEVKPADQILTARRSGNYQPSLWDFNYLQSLNTTHYKEVRHLKREAELIEQVKMLLEEEMEAVQQLELVDDLKNLGLSYFFEDQIKQILTFIYNEHKCFHSNSIIEAEEIRDLYFTALGFRLLRQHGFQISQEVFDCFKNEEGSDFKARLGDDTKGLLQLYEASFLLREGEDTLELARQYATKFLQKKVDHELIDDNNLLSWILHSLEIPLHWRIQRLEARWFLDAYASRRDMNQIILELAKLDFNIIQATQQEELKDLSRWWKSSCLAEKLPFVRDRLVESYFWAIALFEPHQYGYHRKIAAKIITLITSLDDVYDIYGTLDELQLFTDAIQRWDTESISRLPYYMQLFYMVLYNFVPRLAYDGLKEKGFITIPYLQRSWADLVEAYLKEAKWYYNGYTPSMEEYLNNAYISIGATPVISQVFFTLATSIDKPVIDSLYEYHRILRLSGILVRLPDDLGTSPFEMKRGDVPKAIQLYMKERNATEIEAQEHVRFLIREAWKEMNTATAAVDCPFTDDLVTAAANLGRAAQFMYLDGDGNHSQLHQRIACLLFEPYA.

The transit peptide at 1–36 directs the protein to the chloroplast; that stretch reads MSSMRTYVAIMKKPSVEHVDNVDKKASKPSWRVSLS. (2E)-geranyl diphosphate-binding residues include arginine 322, aspartate 359, aspartate 363, arginine 500, and aspartate 503. Mg(2+)-binding residues include aspartate 359 and aspartate 363. The DDXXD motif motif lies at 359–363; sequence DDVYD. Residues aspartate 503, threonine 507, and glutamate 511 each coordinate Mg(2+).

Belongs to the terpene synthase family. Tpsb subfamily. Monomer. It depends on Mg(2+) as a cofactor. Mn(2+) is required as a cofactor.

The protein resides in the plastid. Its subcellular location is the chloroplast. The catalysed reaction is (2E)-geranyl diphosphate + H2O = linalool + diphosphate. It functions in the pathway secondary metabolite biosynthesis; terpenoid biosynthesis. Monoterpene synthase (mono-TPS) involved in the biosynthesis of monoterpenes natural products. Catalyzes the conversion of (2E)-geranyl diphosphate (GPP) into linalool. In Perilla frutescens var. hirtella (Perilla citriodora), this protein is Linalool synthase Tps-5031L19, chloroplastic.